A 380-amino-acid chain; its full sequence is Anthranilate phosphoribosyltransferase (380 aa).

5-phospho-alpha-D-ribose 1-diphosphate contacts are provided by Gly-109, Asn-119, Ser-121, Thr-122, Lys-142, Ser-144, and Ser-146. Mg(2+) is bound by residues Asp-258 and Glu-259.

Belongs to the anthranilate phosphoribosyltransferase family. Homodimer. The cofactor is Mg(2+).

It carries out the reaction N-(5-phospho-beta-D-ribosyl)anthranilate + diphosphate = 5-phospho-alpha-D-ribose 1-diphosphate + anthranilate. Its pathway is amino-acid biosynthesis; L-tryptophan biosynthesis; L-tryptophan from chorismate: step 2/5. Catalyzes the transfer of the phosphoribosyl group of 5-phosphorylribose-1-pyrophosphate (PRPP) to anthranilate to yield N-(5'-phosphoribosyl)-anthranilate (PRA), the second step in tryptophan biosynthesis. The polypeptide is Anthranilate phosphoribosyltransferase (Saccharomyces cerevisiae (strain ATCC 204508 / S288c) (Baker's yeast)).